The chain runs to 247 residues: Cationic trypsin-3 (247 aa).

A signal peptide spans 1–15; the sequence is MKALIFLAFLGAAVA. The propeptide at 16-24 is activation peptide; sequence LPLDDDDDK. The Peptidase S1 domain maps to 25-245; the sequence is IVGGYTCQKN…YVNWIQQTVA (221 aa). 6 cysteine pairs are disulfide-bonded: Cys-31–Cys-161, Cys-49–Cys-65, Cys-133–Cys-234, Cys-140–Cys-207, Cys-172–Cys-186, and Cys-197–Cys-221. His-64 serves as the catalytic Charge relay system. 4 residues coordinate Ca(2+): Glu-76, Asn-78, Val-81, and Glu-86. The active-site Charge relay system is Asp-108. The active-site Charge relay system is Ser-201.

The protein belongs to the peptidase S1 family. The cofactor is Ca(2+).

It localises to the secreted. The protein localises to the extracellular space. It catalyses the reaction Preferential cleavage: Arg-|-Xaa, Lys-|-Xaa.. This chain is Cationic trypsin-3 (Try3), found in Rattus norvegicus (Rat).